Reading from the N-terminus, the 357-residue chain is (+)-eremophilene synthase (357 aa).

Mg(2+) contacts are provided by D100 and E105. Residues D100 to E105 carry the DDXXE motif motif. R198 serves as a coordination point for substrate. Mg(2+) is bound by residues N244 and S248. K251 contacts substrate. D252 is a Mg(2+) binding site. A substrate-binding site is contributed by R331–Y332.

It belongs to the terpene synthase family. Mg(2+) serves as cofactor.

It catalyses the reaction (2E,6E)-farnesyl diphosphate = (+)-eremophilene + diphosphate. The protein operates within secondary metabolite biosynthesis; terpenoid biosynthesis. Its function is as follows. Catalyzes the conversion of (2E,6E)-farnesyl diphosphate (FPP) to yield the bicyclic sesquiterpene eremophilene via a 1,10-cyclization, which requires the abstraction of the pyrophosphate from FPP to yield the (E,E)-germacradienyl cation. The only accepted substrate is farnesyl diphosphate (FPP). The polypeptide is (+)-eremophilene synthase (Gibberella fujikuroi (strain CBS 195.34 / IMI 58289 / NRRL A-6831) (Bakanae and foot rot disease fungus)).